Consider the following 602-residue polypeptide: Pyranose dehydrogenase 1 (602 aa).

Positions 1 to 25 (MLPRVTKLNSRLLSLALLGIQIARG) are cleaved as a signal peptide. The N-linked (GlcNAc...) asparagine glycan is linked to N100. H128 carries the tele-8alpha-FAD histidine modification. N200, N277, and N344 each carry an N-linked (GlcNAc...) asparagine glycan. The active-site Proton acceptor is H537. The active site involves H581.

Belongs to the GMC oxidoreductase family. Monomer. FAD is required as a cofactor. In terms of processing, N-glycosylated.

The protein localises to the secreted. It catalyses the reaction pyranose + acceptor = pyranos-2-ulose + reduced acceptor.. The catalysed reaction is pyranose + acceptor = pyranos-3-ulose + reduced acceptor.. It carries out the reaction pyranose + acceptor = pyranos-2,3-diulose + reduced acceptor.. The enzyme catalyses a pyranoside + acceptor = a pyranosid-3-ulose + reduced acceptor.. It catalyses the reaction a pyranoside + acceptor = a pyranosid-3,4-diulose + reduced acceptor.. Its function is as follows. Catalyzes the single-oxidation or sequential double oxidation reaction of carbohydrates primarily at carbon-2 and/or carbon-3 with the concomitant reduction of the flavin. The enzyme exhibits a broad sugar substrate specificity, oxidizing different aldopyranoses to the corresponding C-1, C-2, C-3 or C-1,2, C-2,3 and C-3,4 (di)dehydro sugars with substrate-specific regioselectivity. Accepts only a narrow range of electron acceptors such as substituted benzoquinones and complexed metal ions and reacts extremely slowly with O(2) as acceptor. May play a role in the natural recycling of plant matter by oxidizing all major monosaccharides in lignocellulose and by reducing quinone compounds or reactive radical species generated during lignin depolymerization. This is Pyranose dehydrogenase 1 from Leucoagaricus meleagris (Western flat-topped agaric).